Reading from the N-terminus, the 263-residue chain is Phosphatidylserine decarboxylase proenzyme (263 aa).

Active-site charge relay system; for autoendoproteolytic cleavage activity residues include Asp-90, His-146, and Ser-230. Ser-230 (schiff-base intermediate with substrate; via pyruvic acid; for decarboxylase activity) is an active-site residue. The residue at position 230 (Ser-230) is a Pyruvic acid (Ser); by autocatalysis.

Belongs to the phosphatidylserine decarboxylase family. PSD-B subfamily. Prokaryotic type I sub-subfamily. Heterodimer of a large membrane-associated beta subunit and a small pyruvoyl-containing alpha subunit. Pyruvate is required as a cofactor. Post-translationally, is synthesized initially as an inactive proenzyme. Formation of the active enzyme involves a self-maturation process in which the active site pyruvoyl group is generated from an internal serine residue via an autocatalytic post-translational modification. Two non-identical subunits are generated from the proenzyme in this reaction, and the pyruvate is formed at the N-terminus of the alpha chain, which is derived from the carboxyl end of the proenzyme. The autoendoproteolytic cleavage occurs by a canonical serine protease mechanism, in which the side chain hydroxyl group of the serine supplies its oxygen atom to form the C-terminus of the beta chain, while the remainder of the serine residue undergoes an oxidative deamination to produce ammonia and the pyruvoyl prosthetic group on the alpha chain. During this reaction, the Ser that is part of the protease active site of the proenzyme becomes the pyruvoyl prosthetic group, which constitutes an essential element of the active site of the mature decarboxylase.

The protein resides in the cell membrane. It carries out the reaction a 1,2-diacyl-sn-glycero-3-phospho-L-serine + H(+) = a 1,2-diacyl-sn-glycero-3-phosphoethanolamine + CO2. It functions in the pathway phospholipid metabolism; phosphatidylethanolamine biosynthesis; phosphatidylethanolamine from CDP-diacylglycerol: step 2/2. In terms of biological role, catalyzes the formation of phosphatidylethanolamine (PtdEtn) from phosphatidylserine (PtdSer). The protein is Phosphatidylserine decarboxylase proenzyme of Bacillus subtilis (strain 168).